The sequence spans 278 residues: Diaminopimelate epimerase (278 aa).

Substrate is bound by residues N13, Q46, and N67. The active-site Proton donor is the C76. Substrate contacts are provided by residues 77–78, N160, N193, and 211–212; these read GN and ER. The active-site Proton acceptor is the C220. A substrate-binding site is contributed by 221 to 222; it reads GT.

The protein belongs to the diaminopimelate epimerase family. In terms of assembly, homodimer.

The protein localises to the cytoplasm. The catalysed reaction is (2S,6S)-2,6-diaminopimelate = meso-2,6-diaminopimelate. The protein operates within amino-acid biosynthesis; L-lysine biosynthesis via DAP pathway; DL-2,6-diaminopimelate from LL-2,6-diaminopimelate: step 1/1. Its function is as follows. Catalyzes the stereoinversion of LL-2,6-diaminopimelate (L,L-DAP) to meso-diaminopimelate (meso-DAP), a precursor of L-lysine and an essential component of the bacterial peptidoglycan. This is Diaminopimelate epimerase from Thioalkalivibrio sulfidiphilus (strain HL-EbGR7).